Here is a 333-residue protein sequence, read N- to C-terminus: Small GTPase-like protein LIP2 (333 aa).

Residues 11-288 (NKEHMVAPLC…YKYNTLPQHN (278 aa)) are small GTPase-like. GTP contacts are provided by residues 29-36 (GDSGVGKS), 90-94 (DVSGH), and 160-163 (NKAD). The span at 242 to 253 (SPSSAWSLSHAP) shows a compositional bias: polar residues. The interval 242-265 (SPSSAWSLSHAPSQRLDEGTSDED) is disordered.

This sequence belongs to the small GTPase superfamily.

This is Small GTPase-like protein LIP2 from Arabidopsis thaliana (Mouse-ear cress).